The chain runs to 190 residues: CDP-diacylglycerol--glycerol-3-phosphate 3-phosphatidyltransferase (190 aa).

The Cytoplasmic portion of the chain corresponds to 6-17 (GVFNIPMYLTLF). A helical transmembrane segment spans residues 18–42 (RIIMVPCFVAVFYWPIYWSPMLCTL). At 43 to 65 (IFFIAAITDWFDGFLARRWNQTS) the chain is on the periplasmic side. Residues 66-86 (RIGGFLDPIADKIMIITALIL) traverse the membrane as a helical segment. Over 87 to 91 (ISEHF) the chain is Cytoplasmic. The helical transmembrane segment at 92-112 (HVWWMTLPISSIIIREILISS) threads the bilayer. Residues 113-150 (LRECIARVDNKNNISVIWLSKVKTFAQMLALIALLCRL) lie on the Periplasmic side of the membrane. A helical membrane pass occupies residues 151 to 173 (NEWTVIMGVISLYTAMLLTLWSM). At 174 to 186 (CYYVYSVSSILLQ) the chain is on the cytoplasmic side.

This sequence belongs to the CDP-alcohol phosphatidyltransferase class-I family.

It localises to the cell inner membrane. It carries out the reaction a CDP-1,2-diacyl-sn-glycerol + sn-glycerol 3-phosphate = a 1,2-diacyl-sn-glycero-3-phospho-(1'-sn-glycero-3'-phosphate) + CMP + H(+). It participates in phospholipid metabolism; phosphatidylglycerol biosynthesis; phosphatidylglycerol from CDP-diacylglycerol: step 1/2. In terms of biological role, catalyzes the conversion of cytidine diphosphate diacylglycerol (CDP-DG) and glycerol 3-phosphate into phosphatidylglycerol. Essential for the synthesis of anionic phospholipids, thereby playing a role in balancing the ratio of zwitterionic and anionic phospholipids, which is thought to be important for normal membrane function. The sequence is that of CDP-diacylglycerol--glycerol-3-phosphate 3-phosphatidyltransferase from Blochmanniella floridana.